A 158-amino-acid chain; its full sequence is SsrA-binding protein (158 aa).

The tract at residues 131–158 is disordered; sequence GKKTHDKRETEKKRDWNREKARLLRDRG. Residues 136–158 show a composition bias toward basic and acidic residues; the sequence is DKRETEKKRDWNREKARLLRDRG.

It belongs to the SmpB family.

Its subcellular location is the cytoplasm. Functionally, required for rescue of stalled ribosomes mediated by trans-translation. Binds to transfer-messenger RNA (tmRNA), required for stable association of tmRNA with ribosomes. tmRNA and SmpB together mimic tRNA shape, replacing the anticodon stem-loop with SmpB. tmRNA is encoded by the ssrA gene; the 2 termini fold to resemble tRNA(Ala) and it encodes a 'tag peptide', a short internal open reading frame. During trans-translation Ala-aminoacylated tmRNA acts like a tRNA, entering the A-site of stalled ribosomes, displacing the stalled mRNA. The ribosome then switches to translate the ORF on the tmRNA; the nascent peptide is terminated with the 'tag peptide' encoded by the tmRNA and targeted for degradation. The ribosome is freed to recommence translation, which seems to be the essential function of trans-translation. The polypeptide is SsrA-binding protein (Brucella abortus biovar 1 (strain 9-941)).